The sequence spans 306 residues: Ribosomal RNA small subunit methyltransferase H (306 aa).

S-adenosyl-L-methionine-binding positions include Gly-33–Tyr-35, Asp-51, Phe-78, Asp-96, and Gln-103.

Belongs to the methyltransferase superfamily. RsmH family.

It localises to the cytoplasm. It carries out the reaction cytidine(1402) in 16S rRNA + S-adenosyl-L-methionine = N(4)-methylcytidine(1402) in 16S rRNA + S-adenosyl-L-homocysteine + H(+). Specifically methylates the N4 position of cytidine in position 1402 (C1402) of 16S rRNA. In Rickettsia prowazekii (strain Madrid E), this protein is Ribosomal RNA small subunit methyltransferase H.